We begin with the raw amino-acid sequence, 415 residues long: Maintenance of mitochondrial morphology protein 1 (415 aa).

The Lumenal segment spans residues 1–18 (MADICPSRSEPTLSFTQG). Residues 19 to 39 (LILGQLSVVLLLAAFIKFFIF) traverse the membrane as a helical segment. The Cytoplasmic segment spans residues 40–415 (GDPPSPEVVA…MPGSMPGSMP (376 aa)). The SMP-LTD domain maps to 114–330 (QPESLDWFNV…EPRFQEIALP (217 aa)). The span at 373–389 (IEAEAHGGADRVPDSLR) shows a compositional bias: basic and acidic residues. Positions 373 to 415 (IEAEAHGGADRVPDSLRYRHRPRADEEFPGAGSMPGSMPGSMP) are disordered. The segment covering 404–415 (GSMPGSMPGSMP) has biased composition (low complexity).

It belongs to the MMM1 family. In terms of assembly, homodimer. Component of the ER-mitochondria encounter structure (ERMES) or MDM complex, composed of mmm-1, mdm10, mdm12 and mdm34. A mmm-1 homodimer associates with one molecule of mdm12 on each side in a pairwise head-to-tail manner, and the SMP-LTD domains of mmm-1 and mdm12 generate a continuous hydrophobic tunnel for phospholipid trafficking.

It is found in the endoplasmic reticulum membrane. Its function is as follows. Component of the ERMES/MDM complex, which serves as a molecular tether to connect the endoplasmic reticulum (ER) and mitochondria. Components of this complex are involved in the control of mitochondrial shape and protein biogenesis, and function in nonvesicular lipid trafficking between the ER and mitochondria. The mdm12-mmm-1 subcomplex functions in the major beta-barrel assembly pathway that is responsible for biogenesis of all outer membrane beta-barrel proteins, and acts in a late step after the SAM complex. The mdm10-mdm12-mmm-1 subcomplex further acts in the TOM40-specific pathway after the action of the mdm12-mmm-1 complex. Essential for establishing and maintaining the structure of mitochondria and maintenance of mtDNA nucleoids. The polypeptide is Maintenance of mitochondrial morphology protein 1 (mmm-1) (Neurospora crassa (strain ATCC 24698 / 74-OR23-1A / CBS 708.71 / DSM 1257 / FGSC 987)).